The chain runs to 551 residues: Nucleobase-ascorbate transporter 3 (551 aa).

Residues 1–30 (MVETGHHHQHPPAPAAAGHPPVPSMAMARN) are disordered. Transmembrane regions (helical) follow at residues 56–76 (ETVVLAFQHYIVMLGTTVLIA), 92–111 (RVIQTILFMSGINTLLQTLI), 117–136 (TVMGVSFAYVLPVLSIIRDY), 158–178 (SLIISSFVNIIIGYGQAWGNL), 179–199 (IRIFSPIIVVPVVSVVSLGLF), 202–222 (GFPLLANCVEIGLPMLILLII), 242–262 (ALLVCLAIIWAFAAILTVSGA), 306–326 (VFGMFGAAIVASAESTGVFFA), 390–410 (FFMIFFSIFGKFGAFFASIPL), 412–432 (IFAGVYCILLGIVVAVGISFI), 442–462 (NMYVIGVSLFLSLSIAQYFLA), and 481–501 (DILNTIFASAPLVATILATIL).

It belongs to the nucleobase:cation symporter-2 (NCS2) (TC 2.A.40) family. In terms of tissue distribution, expressed in the apical meristem 4 days after imbibition (DAI). Expressed in the major veins of rosette leaves and pedicels. Expressed in the root central cylinder, root meristems, root tips and lateral root primordia.

The protein resides in the membrane. This chain is Nucleobase-ascorbate transporter 3 (NAT3), found in Arabidopsis thaliana (Mouse-ear cress).